The chain runs to 905 residues: Toll-like receptor 3 (905 aa).

Positions 1–25 are cleaved as a signal peptide; that stretch reads MKGCSSYLMYSFGGLLSLWILLVSS. Positions 26 to 52 constitute an LRRNT domain; sequence TNQCTVRYNVADCSHLKLTHIPDDLPS. Topologically, residues 26–705 are lumenal; it reads TNQCTVRYNV…SCKDSAPFEL (680 aa). A disulfide bridge links Cys-29 with Cys-38. 3 N-linked (GlcNAc...) asparagine glycosylation sites follow: Asn-53, Asn-58, and Asn-71. LRR repeat units follow at residues 53-74, 77-98, 101-122, 125-146, 149-170, and 173-196; these read NITV…NFTR, QLAI…LCQI, LLKV…TFVF, NLTE…PFKN, NLIK…TGVQ, and NLQE…EFLG. The cysteines at positions 96 and 123 are disulfide-linked. N-linked (GlcNAc...) asparagine glycosylation occurs at Asn-125. A glycan (N-linked (GlcNAc...) asparagine) is linked at Asn-197. The stretch at 199–220 is one LRR 7 repeat; sequence SLRKLDLSSNPLKEFSPGCFQT. Residues Asn-248, Asn-253, Asn-276, and Asn-292 are each glycosylated (N-linked (GlcNAc...) asparagine). LRR repeat units lie at residues 250–271, 276–297, 300–321, 324–345, 357–378, 381–401, 409–430, 433–454, 458–479, 482–502, 508–529, 532–553, 564–585, 588–609, and 612–633; these read SIQN…TFSG, NLTQ…SFSY, SLRY…SFYG, NLRY…ASHP, YLEY…TFTG, SLKY…TNET, PLLT…TFSW, QLRI…QEWR, NIFE…SFAL, SLQR…SPSP, NLTI…LLEG, NLEI…ANPG, HLHI…VFKN, ELKS…IFDD, and SLRS…VFGP. N-linked (GlcNAc...) asparagine glycosylation is found at Asn-399, Asn-414, and Asn-425. N-linked (GlcNAc...) asparagine glycosylation is present at Asn-508. An LRRCT domain is found at 646–699; the sequence is NPFDCTCESISWFVNWINQTHTNISELSTHYLCNTPHHYYGFPLKLFDTSSCKD. 2 disulfide bridges follow: Cys-650/Cys-678 and Cys-652/Cys-697. 2 N-linked (GlcNAc...) asparagine glycosylation sites follow: Asn-663 and Asn-668. A helical membrane pass occupies residues 706-726; that stretch reads LFIISTSMLLVFILVVLLIHI. Residues 727–905 lie on the Cytoplasmic side of the membrane; the sequence is EGWRISFYWN…VALGSRNSAH (179 aa). Residues 755 to 898 form the TIR domain; the sequence is FEYTAYIIHA…AFHHKLQVAL (144 aa). The residue at position 760 (Tyr-760) is a Phosphotyrosine. Residues Lys-766, Lys-813, and Lys-832 each participate in a glycyl lysine isopeptide (Lys-Gly) (interchain with G-Cter in ubiquitin) cross-link. Tyr-859 carries the phosphotyrosine modification.

Belongs to the Toll-like receptor family. In terms of assembly, monomer and homodimer; dimerization is triggered by ligand-binding, the signaling unit is composed of one ds-RNA of around 40 bp and two TLR3 molecules, and lateral clustering of signaling units along the length of the ds-RNA ligand is required for TLR3 signal transduction. Interacts (via transmembrane domain) with UNC93B1; the interaction is required for transport from the ER to the endosomes. Interacts with SRC; upon binding of double-stranded RNA. Interacts with TICAM1 (via the TIR domain) in response to poly(I:C) and this interaction is enhanced in the presence of WDFY1. The tyrosine-phosphorylated form (via TIR domain) interacts with WDFY1 (via WD repeat 2) in response to poly(I:C). Ubiquitinated by RNF170 at Lys-766 via 'Lys-48'-linked ubiquitin chains; leading to TLR3 proteasomal degradation. In terms of processing, TLR3 signaling requires a proteolytic cleavage mediated by cathepsins CTSB and CTSH, the cleavage occurs between amino acids 252 and 346. The cleaved form of TLR3 is the predominant form found in endosomes. Post-translationally, ubiquitinated by TRIM3; leading to recognition and sorting of polyubiquitinated TLR3 by the ESCRT complexes. Ubiquitinated by ZNRF1 via 'Lys-63'-linked ubiquitin chains; leading to TLR3 lysosomal trafficking and degradation. As to expression, highly expressed in lung. After intraperitoneal injection of lipopolysaccharide, highly expressed in brain, heart, kidney, liver, lung and spleen.

It is found in the endoplasmic reticulum membrane. The protein resides in the endosome membrane. It localises to the early endosome. Key component of innate and adaptive immunity. TLRs (Toll-like receptors) control host immune response against pathogens through recognition of molecular patterns specific to microorganisms. TLR3 is a nucleotide-sensing TLR which is activated by double-stranded RNA, a sign of viral infection. Acts via the adapter TRIF/TICAM1, leading to NF-kappa-B activation, IRF3 nuclear translocation, cytokine secretion and the inflammatory response. In Mus musculus (Mouse), this protein is Toll-like receptor 3.